Here is a 347-residue protein sequence, read N- to C-terminus: Protein RecA (347 aa).

An ATP-binding site is contributed by 64–71; that stretch reads GPESSGKT.

It belongs to the RecA family.

Its subcellular location is the cytoplasm. Can catalyze the hydrolysis of ATP in the presence of single-stranded DNA, the ATP-dependent uptake of single-stranded DNA by duplex DNA, and the ATP-dependent hybridization of homologous single-stranded DNAs. It interacts with LexA causing its activation and leading to its autocatalytic cleavage. This chain is Protein RecA, found in Bartonella quintana (strain Toulouse) (Rochalimaea quintana).